We begin with the raw amino-acid sequence, 527 residues long: Zinc finger CCCH-type with G patch domain-containing protein (527 aa).

The segment at glycine 97 to aspartate 126 is disordered. Residues aspartate 111 to valine 125 show a composition bias toward acidic residues. The segment at glutamine 173 to valine 200 adopts a C3H1-type zinc-finger fold. Residues leucine 268–glycine 312 are disordered. The region spanning threonine 317–glutamate 363 is the G-patch domain. Disordered regions lie at residues threonine 369 to threonine 396, leucine 410 to glycine 444, and lysine 505 to phenylalanine 527. A compositionally biased stretch (basic residues) spans arginine 384–alanine 393. The span at alanine 511–phenylalanine 527 shows a compositional bias: basic and acidic residues.

It localises to the nucleus. Its function is as follows. Transcription repressor that specifically binds the 5'-GGAG[GA]A[GA]A-3' consensus sequence. Represses transcription by recruiting the chromatin multiprotein complex NuRD to target promoters. Negatively regulates expression of EGFR, a gene involved in cell proliferation, survival and migration. The sequence is that of Zinc finger CCCH-type with G patch domain-containing protein (zgpat) from Salmo salar (Atlantic salmon).